Here is a 715-residue protein sequence, read N- to C-terminus: Interferon-induced GTP-binding protein Mx2 (715 aa).

The segment covering 1–14 (MSKAHKSWPHRRRN) has biased composition (basic residues). Disordered stretches follow at residues 1 to 24 (MSKA…SLKK) and 69 to 88 (NNQP…PENN). The span at 69 to 80 (NNQPLPGNTSQP) shows a compositional bias: polar residues. In terms of domain architecture, Dynamin-type G spans 115–387 (DLALPAIAVI…LITHIQKSLP (273 aa)). Positions 125–132 (GDQSSGKS) are G1 motif. 125–132 (GDQSSGKS) contacts GTP. The tract at residues 150–152 (VTR) is G2 motif. A G3 motif region spans residues 225 to 228 (DLPG). GTP contacts are provided by residues 225–229 (DLPGI) and 294–297 (TKPD). The segment at 294–297 (TKPD) is G4 motif. The tract at residues 326–329 (KCRG) is G5 motif. Residues 623–714 (FNEIGVHLNA…ALCQFSSKEI (92 aa)) form the GED domain.

This sequence belongs to the TRAFAC class dynamin-like GTPase superfamily. Dynamin/Fzo/YdjA family.

The protein resides in the cytoplasm. It localises to the nucleus. Interferon-induced dynamin-like GTPase with antiviral activity. This Macaca mulatta (Rhesus macaque) protein is Interferon-induced GTP-binding protein Mx2 (MX2).